The chain runs to 336 residues: MKLAVIPGDGIGVEVTAEALKVLRKLVPDLQTTEYDLGARRYNATGELLPDADLAAIREHDAILLGAIGDPSVTPGVLERGLLLNMRFALDHHVNLRPSQLYPGSKSPLAAQPDIDFVVVREGTEGPYTGNGGAIRVGTPHEIATEVSINTWFGAERVVRYAFALAQTRRKHVTLIHKTNVLSNAGAIWTRAVETVSAEYPDVETAYCHIDAATIYMVTDPSRFDVIVTDNLFGDIITDLAGAVTGGIGLAASGNIDASGTNPSMFEPVHGSAPDIAGQGIADPTAAILSAALLLRHLGRDGDAARIEAAVEADLASRGDSKVVTSEVGDRIAAAL.

Positions 87, 97, 121, and 211 each coordinate substrate. Mg(2+) is bound by residues aspartate 211, aspartate 235, and aspartate 239. NAD(+) is bound at residue 271-283; sequence GSAPDIAGQGIAD.

This sequence belongs to the isocitrate and isopropylmalate dehydrogenases family. LeuB type 2 subfamily. In terms of assembly, homodimer. Requires Mg(2+) as cofactor. Mn(2+) is required as a cofactor.

The protein localises to the cytoplasm. The catalysed reaction is (2R,3S)-3-isopropylmalate + NAD(+) = 4-methyl-2-oxopentanoate + CO2 + NADH. It functions in the pathway amino-acid biosynthesis; L-leucine biosynthesis; L-leucine from 3-methyl-2-oxobutanoate: step 3/4. Its function is as follows. Catalyzes the oxidation of 3-carboxy-2-hydroxy-4-methylpentanoate (3-isopropylmalate) to 3-carboxy-4-methyl-2-oxopentanoate. The product decarboxylates to 4-methyl-2 oxopentanoate. In Rhodococcus jostii (strain RHA1), this protein is 3-isopropylmalate dehydrogenase.